Consider the following 71-residue polypeptide: Heat-stable enterotoxin A (71 aa).

Positions 1 to 19 are cleaved as a signal peptide; it reads MKKIVFVLVLMLSSFGAFG. Positions 20–53 are excised as a propeptide; it reads QETVSGQFSDALSTPITAEVYKQACDPPLPPAEV. 3 disulfide bridges follow: Cys-59–Cys-64, Cys-60–Cys-68, and Cys-63–Cys-71.

This sequence belongs to the heat-stable enterotoxin family.

Its subcellular location is the secreted. Functionally, toxin which activates the particulate form of guanylate cyclase and increases cyclic GMP levels within the host intestinal epithelial cells. The polypeptide is Heat-stable enterotoxin A (ystA) (Yersinia enterocolitica).